The sequence spans 39 residues: Photosystem II reaction center protein J (39 aa).

The chain crosses the membrane as a helical span at residues 9-29 (LWLVVTFGGIVVLTVLGIFIY).

This sequence belongs to the PsbJ family. As to quaternary structure, PSII is composed of 1 copy each of membrane proteins PsbA, PsbB, PsbC, PsbD, PsbE, PsbF, PsbH, PsbI, PsbJ, PsbK, PsbL, PsbM, PsbT, PsbY, PsbZ, Psb30/Ycf12, at least 3 peripheral proteins of the oxygen-evolving complex and a large number of cofactors. It forms dimeric complexes.

The protein resides in the plastid. Its subcellular location is the chloroplast thylakoid membrane. In terms of biological role, one of the components of the core complex of photosystem II (PSII). PSII is a light-driven water:plastoquinone oxidoreductase that uses light energy to abstract electrons from H(2)O, generating O(2) and a proton gradient subsequently used for ATP formation. It consists of a core antenna complex that captures photons, and an electron transfer chain that converts photonic excitation into a charge separation. In Cyanidium caldarium (Red alga), this protein is Photosystem II reaction center protein J.